A 325-amino-acid chain; its full sequence is Phosphate acyltransferase (325 aa).

It belongs to the PlsX family. In terms of assembly, homodimer. Probably interacts with PlsY.

It is found in the cytoplasm. The catalysed reaction is a fatty acyl-[ACP] + phosphate = an acyl phosphate + holo-[ACP]. It participates in lipid metabolism; phospholipid metabolism. Catalyzes the reversible formation of acyl-phosphate (acyl-PO(4)) from acyl-[acyl-carrier-protein] (acyl-ACP). This enzyme utilizes acyl-ACP as fatty acyl donor, but not acyl-CoA. The sequence is that of Phosphate acyltransferase from Staphylococcus epidermidis (strain ATCC 35984 / DSM 28319 / BCRC 17069 / CCUG 31568 / BM 3577 / RP62A).